The primary structure comprises 377 residues: MKILVDENMPYAEMLFSQLGEVILKPGRSLTADDLVDIDALMIRSVTKVNAALISKASKLKFVGTATAGMDHVDQALLKEKGIYFTAAPGCNKVGVAEYVFSVMMVLAQQQGFSVFEQTVGIVGAGQVGSYLQQCLQGIGIKVLINDPFKQEEGDEREFTSLDRLLQEADVITLHTPITRDGKYPTHHLINKEILNSLRADQILINAARGPVVDNQALKHRLQQADGFTAALDVFEFEPEVDMELLPLLAFATPHVAGYGLEGKARGTTMIFNSYCEFIGNELRAHASDLLPTAPVPKVVLDRKWDEATLHTLTQMVYDVRRDDAQFRREIGAPGAFDLMRKEYWDRREYSAVTLVGSAQCRLKPLAKLGFQVEVSQ.

Ser-45 and Thr-67 together coordinate substrate. NAD(+) is bound by residues 127–128 (QV), Asp-147, and Thr-176. Arg-209 is an active-site residue. Asp-233 is an NAD(+) binding site. Glu-238 is a catalytic residue. Catalysis depends on His-255, which acts as the Proton donor. Gly-258 contributes to the NAD(+) binding site. Residue Tyr-259 coordinates substrate.

Belongs to the D-isomer specific 2-hydroxyacid dehydrogenase family. PdxB subfamily. In terms of assembly, homodimer.

It is found in the cytoplasm. It catalyses the reaction 4-phospho-D-erythronate + NAD(+) = (R)-3-hydroxy-2-oxo-4-phosphooxybutanoate + NADH + H(+). It participates in cofactor biosynthesis; pyridoxine 5'-phosphate biosynthesis; pyridoxine 5'-phosphate from D-erythrose 4-phosphate: step 2/5. Its function is as follows. Catalyzes the oxidation of erythronate-4-phosphate to 3-hydroxy-2-oxo-4-phosphonooxybutanoate. The sequence is that of Erythronate-4-phosphate dehydrogenase from Vibrio vulnificus (strain YJ016).